The primary structure comprises 147 residues: D-aminoacyl-tRNA deacylase (147 aa).

Positions 137–138 (GP) match the Gly-cisPro motif, important for rejection of L-amino acids motif.

The protein belongs to the DTD family. In terms of assembly, homodimer.

The protein localises to the cytoplasm. It carries out the reaction glycyl-tRNA(Ala) + H2O = tRNA(Ala) + glycine + H(+). The enzyme catalyses a D-aminoacyl-tRNA + H2O = a tRNA + a D-alpha-amino acid + H(+). Its function is as follows. An aminoacyl-tRNA editing enzyme that deacylates mischarged D-aminoacyl-tRNAs. Also deacylates mischarged glycyl-tRNA(Ala), protecting cells against glycine mischarging by AlaRS. Acts via tRNA-based rather than protein-based catalysis; rejects L-amino acids rather than detecting D-amino acids in the active site. By recycling D-aminoacyl-tRNA to D-amino acids and free tRNA molecules, this enzyme counteracts the toxicity associated with the formation of D-aminoacyl-tRNA entities in vivo and helps enforce protein L-homochirality. In Bacillus pumilus (strain SAFR-032), this protein is D-aminoacyl-tRNA deacylase.